Reading from the N-terminus, the 250-residue chain is DNA polymerase sliding clamp (250 aa).

The protein belongs to the PCNA family. As to quaternary structure, homotrimer. The subunits circularize to form a toroid; DNA passes through its center. Replication factor C (RFC) is required to load the toroid on the DNA.

In terms of biological role, sliding clamp subunit that acts as a moving platform for DNA processing. Responsible for tethering the catalytic subunit of DNA polymerase and other proteins to DNA during high-speed replication. This Methanococcus maripaludis (strain C5 / ATCC BAA-1333) protein is DNA polymerase sliding clamp.